The sequence spans 92 residues: Kinetoplastid membrane protein 11B (92 aa).

It belongs to the KMP-11 family. Monomer.

It localises to the cytoplasm. The protein localises to the cytoskeleton. Its subcellular location is the cell projection. The protein resides in the cilium. It is found in the flagellum. May be involved in the regulation of the cytoskeleton through interaction with the subpellicular microtubules. May be involved in parasite mobility and attachment to the surface of the host cell. Behaves as a strong immunogen during infection. This Leishmania infantum protein is Kinetoplastid membrane protein 11B (KMP-11B).